The following is a 512-amino-acid chain: Inosine-5'-monophosphate dehydrogenase (512 aa).

2 CBS domains span residues 110–169 (FIMK…SAPV) and 173–231 (MTRR…PNSS). NAD(+)-binding positions include 268 to 270 (DSS) and 318 to 320 (GMG). K(+)-binding residues include G320 and G322. S323 contacts IMP. K(+) is bound at residue C325. C325 serves as the catalytic Thioimidate intermediate. Residues 358-360 (DGG), 381-382 (GS), and 405-409 (YRGMG) each bind IMP. R423 (proton acceptor) is an active-site residue. Q435 contributes to the IMP binding site. K(+) is bound by residues E494 and G495. The short motif at 510-512 (SKL) is the Microbody targeting signal element.

It belongs to the IMPDH/GMPR family. Homotetramer. It depends on K(+) as a cofactor.

The protein localises to the glycosome. The catalysed reaction is IMP + NAD(+) + H2O = XMP + NADH + H(+). Its pathway is purine metabolism; XMP biosynthesis via de novo pathway; XMP from IMP: step 1/1. Its activity is regulated as follows. Mycophenolic acid (MPA) is a non-competitive inhibitor that prevents formation of the closed enzyme conformation by binding to the same site as the amobile flap. In contrast, mizoribine monophosphate (MZP) is a competitive inhibitor that induces the closed conformation. MPA is a potent inhibitor of mammalian IMPDHs but a poor inhibitor of the bacterial enzymes. MZP is a more potent inhibitor of bacterial IMPDH. Functionally, catalyzes the conversion of inosine 5'-phosphate (IMP) to xanthosine 5'-phosphate (XMP), the first committed and rate-limiting step in the de novo synthesis of guanine nucleotides, and therefore plays an important role in the regulation of cell growth. In Trypanosoma brucei brucei, this protein is Inosine-5'-monophosphate dehydrogenase.